The following is a 147-amino-acid chain: Calcium-regulated heat-stable protein 1 (147 aa).

A compositionally biased stretch (pro residues) spans 1-12 (MSSEPPPPPQPP). The segment at 1 to 52 (MSSEPPPPPQPPTHQASVGLLDTPRSRERSPSPLRGNVVPSPLPTRRTRTFS) is disordered. Ser2 carries the post-translational modification N-acetylserine. A phosphoserine mark is found at Ser30, Ser32, and Ser41. Thr45 is subject to Phosphothreonine. Residues Ser52 and Ser58 each carry the phosphoserine modification. Residues 62–129 (VYKGVCKCFC…KLQAVEVVIT (68 aa)) form the CSD domain. 2 positions are modified to phosphoserine: Ser146 and Ser147.

Homodimer. Interacts with STYX. Post-translationally, dephosphorylated by calcineurin in a Ca(2+) dependent manner. Can be phosphorylated by DYRK2 (in vitro).

It localises to the cytoplasm. Its subcellular location is the P-body. The protein resides in the cytoplasmic granule. In terms of biological role, binds mRNA and regulates the stability of target mRNA. Binds single-stranded DNA (in vitro). In Homo sapiens (Human), this protein is Calcium-regulated heat-stable protein 1 (CARHSP1).